Reading from the N-terminus, the 168-residue chain is uncharacterized protein (168 aa).

Disordered regions lie at residues 1–35 (MGSS…KKLD), 48–97 (KVKK…DKGN), and 126–168 (ASIT…GLGM). Positions 29–95 (KEKKKLDEKE…KNSLSRSQDK (67 aa)) form a coiled coil. The span at 68 to 85 (LAEDPMVKNVAENDHDQM) shows a compositional bias: basic and acidic residues. Polar residues predominate over residues 126–139 (ASITESSPSAQSNK). Over residues 140-150 (TNDKQREKELE) the composition is skewed to basic and acidic residues. Residues 157-168 (VLHKGTKKGLGM) are compositionally biased toward basic residues.

This is an uncharacterized protein from Schizosaccharomyces pombe (strain 972 / ATCC 24843) (Fission yeast).